Here is a 509-residue protein sequence, read N- to C-terminus: ATP synthase subunit alpha (509 aa).

169–176 (GDRKTGKT) is a binding site for ATP.

It belongs to the ATPase alpha/beta chains family. In terms of assembly, F-type ATPases have 2 components, CF(1) - the catalytic core - and CF(0) - the membrane proton channel. CF(1) has five subunits: alpha(3), beta(3), gamma(1), delta(1), epsilon(1). CF(0) has three main subunits: a(1), b(2) and c(9-12). The alpha and beta chains form an alternating ring which encloses part of the gamma chain. CF(1) is attached to CF(0) by a central stalk formed by the gamma and epsilon chains, while a peripheral stalk is formed by the delta and b chains.

It localises to the cell membrane. It catalyses the reaction ATP + H2O + 4 H(+)(in) = ADP + phosphate + 5 H(+)(out). Functionally, produces ATP from ADP in the presence of a proton gradient across the membrane. The alpha chain is a regulatory subunit. The chain is ATP synthase subunit alpha from Lacticaseibacillus casei (strain BL23) (Lactobacillus casei).